The primary structure comprises 397 residues: Phosphoglycerate kinase (397 aa).

Substrate is bound by residues 21–23 (DFN), arginine 36, 59–62 (HCGR), arginine 118, and arginine 151. ATP is bound by residues lysine 201, glutamate 323, and 353–356 (GGDT).

The protein belongs to the phosphoglycerate kinase family. In terms of assembly, monomer.

Its subcellular location is the cytoplasm. It carries out the reaction (2R)-3-phosphoglycerate + ATP = (2R)-3-phospho-glyceroyl phosphate + ADP. It functions in the pathway carbohydrate degradation; glycolysis; pyruvate from D-glyceraldehyde 3-phosphate: step 2/5. This is Phosphoglycerate kinase from Bartonella quintana (strain Toulouse) (Rochalimaea quintana).